Here is a 24-residue protein sequence, read N- to C-terminus: Myotoxin TmC4-47.2 (24 aa).

The tract at residues 1–24 (KASSSAPKGWTHHGSRFTFHRGSM) is disordered. Over residues 10–24 (WTHHGSRFTFHRGSM) the composition is skewed to basic residues. Residues 13–24 (HGSRFTFHRGSM) enclose the C-type lectin domain.

As to expression, expressed by the venom gland.

The protein resides in the secreted. Its function is as follows. Able to depolarize frog skeletal muscle fibers, but has no effects on squid giant axons. Tetrodotoxin is able to partially antagonize the depolarization. Induces myonecrosis. This chain is Myotoxin TmC4-47.2, found in Thalassophryne maculosa (Cano toadfish).